Reading from the N-terminus, the 1030-residue chain is Protein phosphatase 1 regulatory subunit 12A (1030 aa).

Positions 35-38 (KVKF) match the KVKF motif motif. 6 ANK repeats span residues 39-68 (DDGA…DINY), 72-101 (DGLT…NINQ), 105-134 (EGWI…HVGA), 138-164 (EGDT…RQGV), 198-227 (SGGT…DVNI), and 231-260 (DGWT…DMEM). Asn-67 and Asn-100 each carry (3S)-3-hydroxyasparagine; by HIF1AN; partial. (3S)-3-hydroxyasparagine; by HIF1AN; partial is present on Asn-226. Disordered stretches follow at residues 290 to 628 (LHSE…SVPT) and 643 to 928 (ASTT…EKDD). Residues 291–300 (HSEKRDKKSP) show a composition bias toward basic and acidic residues. Position 299 is a phosphoserine (Ser-299). Polar residues predominate over residues 302–316 (IESTANMDNNQSQKT). Residues 318-340 (KNKETLIIEPEKNASRIESLEQE) show a composition bias toward basic and acidic residues. The span at 357–369 (SEEDEEDDSESEA) shows a compositional bias: acidic residues. The span at 385–402 (TSSTQAAPVAVTTPTVSS) shows a compositional bias: low complexity. A phosphoserine mark is found at Ser-422 and Ser-432. Over residues 422 to 432 (SPKEEERKDES) the composition is skewed to basic and acidic residues. The residue at position 443 (Thr-443) is a Phosphothreonine. Ser-445 is modified (phosphoserine; by NUAK1). Position 446 is a phosphotyrosine (Tyr-446). A compositionally biased stretch (low complexity) spans 469–480 (RSASSPRLSSSL). Residue Ser-472 is modified to Phosphoserine; by NUAK1. The residue at position 473 (Ser-473) is a Phosphoserine; by CDK1. Phosphoserine is present on Ser-477. A compositionally biased stretch (basic and acidic residues) spans 481–491 (DNKEKEKDSKG). Ser-507 and Ser-509 each carry phosphoserine. Polar residues predominate over residues 540–551 (NSSVNEGSTYHK). Over residues 564-610 (SSSVPSTTSTPTVTSAAGLQKSLLSSTSTTTKITTGSSSAGTQSSTS) the composition is skewed to low complexity. A phosphoserine mark is found at Ser-601 and Ser-618. The segment covering 614-625 (WAEDSTEKEKDS) has biased composition (basic and acidic residues). A compositionally biased stretch (low complexity) spans 643 to 660 (ASTTTLTTTTAGTVSSTT). The span at 673 to 682 (VRDEESESQR) shows a compositional bias: basic and acidic residues. The tract at residues 682–864 (RKARSRQARQ…VSFWTQDSDE (183 aa)) is interaction with ROCK2. A compositionally biased stretch (basic residues) spans 683-693 (KARSRQARQSR). Phosphoserine; by PKA and PKG; in vitro occurs at positions 692 and 695. A Phosphothreonine; by ROCK1, ROCK2, CDC42BP, ZIPK/DAPK3 and RAF1 modification is found at Thr-696. The span at 718 to 767 (RTREQENEEKEKEEKEKQDKEKQEEKKESETSREDEYKQKYSRTYDETYQ) shows a compositional bias: basic and acidic residues. Over residues 773–795 (STSSSTTPSSSLSTMSSSLYASS) the composition is skewed to low complexity. Positions 796 to 810 (QLNRPNSLVGITSAY) are enriched in polar residues. At Ser-802 the chain carries Phosphoserine. Residues 814-840 (ITKENEREGEKREEEKEGEDKSQPKSI) are compositionally biased toward basic and acidic residues. The segment covering 841-852 (RERRRPREKRRS) has biased composition (basic residues). Phosphoserine; by ROCK2 is present on Ser-852. Positions 861–875 (DSDENEQEQQSDTEE) are enriched in acidic residues. Phosphoserine is present on residues Ser-862 and Ser-871. The span at 884–897 (TDSISRYETSSTSA) shows a compositional bias: polar residues. Residues Ser-903 and Ser-908 each carry the phosphoserine modification. Residues 903–913 (SLLGRSGSYSY) show a composition bias toward low complexity. Ser-910 carries the phosphoserine; by NUAK1 modification. Over residues 914 to 928 (LEERKPYSSRLEKDD) the composition is skewed to basic and acidic residues. A Phosphoserine modification is found at Ser-995.

In terms of assembly, PP1 comprises a catalytic subunit, PPP1CA, PPP1CB or PPP1CC, and one or several targeting or regulatory subunits. PPP1R12A mediates binding to myosin. Interacts with ARHA and CIT. Binds PPP1R12B, ROCK1 and IL16. Interacts directly with PRKG1. Non-covalent dimer of 2 dimers; PRKG1-PRKG1 and PPP1R12A-PPP1R12A. Interacts with SMTNL1. Interacts with PPP1CB; the interaction is direct. Interacts (when phosphorylated at Ser-445, Ser-472 and Ser-910) with 14-3-3. Interacts with ROCK1 and ROCK2. Interacts with isoform 1 and isoform 2 of ZIPK/DAPK3. Interacts with RAF1. Interacts with HIF1AN. Interacts with NCKAP1L. Phosphorylated by CIT (Rho-associated kinase). Phosphorylated cooperatively by ROCK1 and CDC42BP on Thr-696. Phosphorylated on upon DNA damage, probably by ATM or ATR. In vitro, phosphorylation of Ser-695 by PKA and PKG appears to prevent phosphorylation of the inhibitory site Thr-696, probably mediated by PRKG1. Phosphorylation at Ser-445, Ser-472 and Ser-910 by NUAK1 promotes interaction with 14-3-3, leading to inhibit interaction with myosin light chain MLC2, preventing dephosphorylation of MLC2. May be phosphorylated at Thr-696 by DMPK; may inhibit the myosin phosphatase activity. Phosphorylated at Ser-473 by CDK1 during mitosis, creating docking sites for the POLO box domains of PLK1. Subsequently, PLK1 binds and phosphorylates PPP1R12A. Expressed in striated muscles, specifically in type 2a fibers (at protein level).

It localises to the cytoplasm. Its subcellular location is the cytoskeleton. The protein localises to the stress fiber. Key regulator of protein phosphatase 1C (PPP1C). Mediates binding to myosin. As part of the PPP1C complex, involved in dephosphorylation of PLK1. Capable of inhibiting HIF1AN-dependent suppression of HIF1A activity. This is Protein phosphatase 1 regulatory subunit 12A from Homo sapiens (Human).